A 555-amino-acid chain; its full sequence is CTP synthase (555 aa).

An amidoligase domain region spans residues 1–267; sequence MPKFVFVTGG…CKEVLEFLDL (267 aa). CTP is bound at residue S13. S13 contributes to the UTP binding site. ATP-binding positions include 14-19 and D71; that span reads SIGKGI. Mg(2+) is bound by residues D71 and E141. CTP is bound by residues 148–150, 188–193, and K224; these read DIE and KTKPTQ. Residues 188 to 193 and K224 each bind UTP; that span reads KTKPTQ. One can recognise a Glutamine amidotransferase type-1 domain in the interval 292-534; it reads KVAVVGKYVQ…IAAAQSRLPR (243 aa). G354 is an L-glutamine binding site. C381 (nucleophile; for glutamine hydrolysis) is an active-site residue. Residues 382–385, E405, and R462 contribute to the L-glutamine site; that span reads LGMQ. Active-site residues include H507 and E509. The segment at 532–555 is disordered; the sequence is LPRSPQEALKQTQINSPNQSKNNP. The segment covering 540 to 555 has biased composition (polar residues); it reads LKQTQINSPNQSKNNP.

This sequence belongs to the CTP synthase family. As to quaternary structure, homotetramer.

It catalyses the reaction UTP + L-glutamine + ATP + H2O = CTP + L-glutamate + ADP + phosphate + 2 H(+). It carries out the reaction L-glutamine + H2O = L-glutamate + NH4(+). The catalysed reaction is UTP + NH4(+) + ATP = CTP + ADP + phosphate + 2 H(+). It functions in the pathway pyrimidine metabolism; CTP biosynthesis via de novo pathway; CTP from UDP: step 2/2. With respect to regulation, allosterically activated by GTP, when glutamine is the substrate; GTP has no effect on the reaction when ammonia is the substrate. The allosteric effector GTP functions by stabilizing the protein conformation that binds the tetrahedral intermediate(s) formed during glutamine hydrolysis. Inhibited by the product CTP, via allosteric rather than competitive inhibition. In terms of biological role, catalyzes the ATP-dependent amination of UTP to CTP with either L-glutamine or ammonia as the source of nitrogen. Regulates intracellular CTP levels through interactions with the four ribonucleotide triphosphates. In Prochlorococcus marinus (strain MIT 9211), this protein is CTP synthase.